Consider the following 203-residue polypeptide: Endo-type membrane-bound lytic murein transglycosylase A (203 aa).

The first 15 residues, 1–15 (MKLRWFAFLIVLLAG), serve as a signal peptide directing secretion. Cys-16 is lipidated: N-palmitoyl cysteine. Cys-16 carries the S-diacylglycerol cysteine lipid modification.

It belongs to the transglycosylase Slt family.

The protein resides in the cell outer membrane. It carries out the reaction Endolytic cleavage of the (1-&gt;4)-beta-glycosidic linkage between N-acetylmuramic acid (MurNAc) and N-acetylglucosamine (GlcNAc) residues in peptidoglycan with concomitant formation of a 1,6-anhydrobond in the MurNAc residue.. Functionally, murein-degrading enzyme. May play a role in recycling of muropeptides during cell elongation and/or cell division. Preferentially cleaves at a distance of more than two disaccharide units from the ends of the glycan chain. This chain is Endo-type membrane-bound lytic murein transglycosylase A, found in Escherichia coli (strain K12 / MC4100 / BW2952).